The chain runs to 338 residues: Ribosomal RNA small subunit methyltransferase H (338 aa).

S-adenosyl-L-methionine is bound by residues 46–48 (GGY), aspartate 63, phenylalanine 90, aspartate 106, and glutamine 113.

The protein belongs to the methyltransferase superfamily. RsmH family.

It localises to the cytoplasm. It catalyses the reaction cytidine(1402) in 16S rRNA + S-adenosyl-L-methionine = N(4)-methylcytidine(1402) in 16S rRNA + S-adenosyl-L-homocysteine + H(+). Specifically methylates the N4 position of cytidine in position 1402 (C1402) of 16S rRNA. The protein is Ribosomal RNA small subunit methyltransferase H of Mesorhizobium japonicum (strain LMG 29417 / CECT 9101 / MAFF 303099) (Mesorhizobium loti (strain MAFF 303099)).